Here is a 491-residue protein sequence, read N- to C-terminus: Lysine--tRNA ligase 1 (491 aa).

Glutamate 400 and glutamate 407 together coordinate Mg(2+).

This sequence belongs to the class-II aminoacyl-tRNA synthetase family. Homodimer. Requires Mg(2+) as cofactor.

It is found in the cytoplasm. The enzyme catalyses tRNA(Lys) + L-lysine + ATP = L-lysyl-tRNA(Lys) + AMP + diphosphate. This chain is Lysine--tRNA ligase 1, found in Mycoplasmopsis pulmonis (strain UAB CTIP) (Mycoplasma pulmonis).